A 353-amino-acid chain; its full sequence is Inositol 3-kinase (353 aa).

Residues Ser-197, 247 to 250 (GAGD), and Asn-274 each bind ATP. Residue Asp-250 is the Proton acceptor of the active site.

This sequence belongs to the carbohydrate kinase pfkB family.

It carries out the reaction myo-inositol + ATP = 1D-myo-inositol 3-phosphate + ADP + H(+). Its function is as follows. Kinase that phosphorylates myo-inositol to produce multiple myo-inositol monophosphates. Participates in phytic acid biosynthesis in developing seeds. Phytic acid is the primary storage form of phosphorus in cereal grains and other plant seeds. This is Inositol 3-kinase from Arabidopsis thaliana (Mouse-ear cress).